The following is a 124-amino-acid chain: S-adenosylmethionine decarboxylase proenzyme (124 aa).

The active-site Schiff-base intermediate with substrate; via pyruvic acid is Ser63. At Ser63 the chain carries Pyruvic acid (Ser); by autocatalysis. The Proton acceptor; for processing activity role is filled by His68. The active-site Proton donor; for catalytic activity is the Cys83.

It belongs to the prokaryotic AdoMetDC family. Type 1 subfamily. In terms of assembly, heterotetramer of two alpha and two beta chains arranged as a dimer of alpha/beta heterodimers. Pyruvate is required as a cofactor. Is synthesized initially as an inactive proenzyme. Formation of the active enzyme involves a self-maturation process in which the active site pyruvoyl group is generated from an internal serine residue via an autocatalytic post-translational modification. Two non-identical subunits are generated from the proenzyme in this reaction, and the pyruvate is formed at the N-terminus of the alpha chain, which is derived from the carboxyl end of the proenzyme. The post-translation cleavage follows an unusual pathway, termed non-hydrolytic serinolysis, in which the side chain hydroxyl group of the serine supplies its oxygen atom to form the C-terminus of the beta chain, while the remainder of the serine residue undergoes an oxidative deamination to produce ammonia and the pyruvoyl group blocking the N-terminus of the alpha chain.

It carries out the reaction S-adenosyl-L-methionine + H(+) = S-adenosyl 3-(methylsulfanyl)propylamine + CO2. It functions in the pathway amine and polyamine biosynthesis; S-adenosylmethioninamine biosynthesis; S-adenosylmethioninamine from S-adenosyl-L-methionine: step 1/1. In terms of biological role, catalyzes the decarboxylation of S-adenosylmethionine to S-adenosylmethioninamine (dcAdoMet), the propylamine donor required for the synthesis of the polyamines spermine and spermidine from the diamine putrescine. The chain is S-adenosylmethionine decarboxylase proenzyme from Caldanaerobacter subterraneus subsp. tengcongensis (strain DSM 15242 / JCM 11007 / NBRC 100824 / MB4) (Thermoanaerobacter tengcongensis).